The chain runs to 128 residues: MFYSIVAIFVGAGLGALLRWFLSLALNEFFPAVPLGTLAANLIGGYVIGIAAVVFTTRVGLPPEWRLFVITGFLGGLTTFSTYSVEVMTHAVQGEFGWAFAVAALHLTGSFALTALGMWTARAWLAAA.

The next 4 helical transmembrane spans lie at 5-25, 35-55, 67-87, and 96-116; these read IVAI…LSLA, LGTL…AVVF, LFVI…SVEV, and FGWA…LTAL. Residues glycine 75 and threonine 78 each coordinate Na(+).

It belongs to the fluoride channel Fluc/FEX (TC 1.A.43) family.

Its subcellular location is the cell inner membrane. It carries out the reaction fluoride(in) = fluoride(out). Its activity is regulated as follows. Na(+) is not transported, but it plays an essential structural role and its presence is essential for fluoride channel function. Functionally, fluoride-specific ion channel. Important for reducing fluoride concentration in the cell, thus reducing its toxicity. This is Fluoride-specific ion channel FluC from Burkholderia lata (strain ATCC 17760 / DSM 23089 / LMG 22485 / NCIMB 9086 / R18194 / 383).